The primary structure comprises 366 residues: Phospho-N-acetylmuramoyl-pentapeptide-transferase (366 aa).

10 consecutive transmembrane segments (helical) span residues Ala-27–Leu-47, Thr-71–Ala-91, Leu-93–Phe-113, Phe-138–Ala-158, Leu-174–Gly-194, Gly-205–Ala-225, Leu-245–Pro-265, Ala-268–Val-288, Ile-297–Phe-317, and Gln-343–Leu-363.

Belongs to the glycosyltransferase 4 family. MraY subfamily. The cofactor is Mg(2+).

It is found in the cell inner membrane. It carries out the reaction UDP-N-acetyl-alpha-D-muramoyl-L-alanyl-gamma-D-glutamyl-meso-2,6-diaminopimeloyl-D-alanyl-D-alanine + di-trans,octa-cis-undecaprenyl phosphate = di-trans,octa-cis-undecaprenyl diphospho-N-acetyl-alpha-D-muramoyl-L-alanyl-D-glutamyl-meso-2,6-diaminopimeloyl-D-alanyl-D-alanine + UMP. The protein operates within cell wall biogenesis; peptidoglycan biosynthesis. Functionally, catalyzes the initial step of the lipid cycle reactions in the biosynthesis of the cell wall peptidoglycan: transfers peptidoglycan precursor phospho-MurNAc-pentapeptide from UDP-MurNAc-pentapeptide onto the lipid carrier undecaprenyl phosphate, yielding undecaprenyl-pyrophosphoryl-MurNAc-pentapeptide, known as lipid I. The sequence is that of Phospho-N-acetylmuramoyl-pentapeptide-transferase from Rhizobium meliloti (strain 1021) (Ensifer meliloti).